Consider the following 125-residue polypeptide: Protein ApaG (125 aa).

Positions 1 to 125 constitute an ApaG domain; the sequence is MIEQPRICVQ…FRLAIPALIH (125 aa).

The chain is Protein ApaG from Yersinia pseudotuberculosis serotype IB (strain PB1/+).